The sequence spans 140 residues: UPF0102 protein Ppro_1186 (140 aa).

Positions M1–G27 are disordered. Polar residues predominate over residues E10–S25.

This sequence belongs to the UPF0102 family.

The chain is UPF0102 protein Ppro_1186 from Pelobacter propionicus (strain DSM 2379 / NBRC 103807 / OttBd1).